The following is a 482-amino-acid chain: Cysteine--tRNA ligase (482 aa).

C28 is a binding site for Zn(2+). Positions 30–40 (PTVYNFLHVGN) match the 'HIGH' region motif. Residues C208, H233, and E237 each contribute to the Zn(2+) site. The short motif at 265–269 (KMSKS) is the 'KMSKS' region element. K268 lines the ATP pocket.

It belongs to the class-I aminoacyl-tRNA synthetase family. In terms of assembly, monomer. Zn(2+) serves as cofactor.

The protein resides in the cytoplasm. It catalyses the reaction tRNA(Cys) + L-cysteine + ATP = L-cysteinyl-tRNA(Cys) + AMP + diphosphate. This is Cysteine--tRNA ligase from Bdellovibrio bacteriovorus (strain ATCC 15356 / DSM 50701 / NCIMB 9529 / HD100).